Reading from the N-terminus, the 166-residue chain is NAD(P)H-quinone oxidoreductase subunit I, chloroplastic (166 aa).

4Fe-4S ferredoxin-type domains are found at residues glycine 55–lysine 84 and leucine 95–glutamate 124. Residues cysteine 64, cysteine 67, cysteine 70, cysteine 74, cysteine 104, cysteine 107, cysteine 110, and cysteine 114 each contribute to the [4Fe-4S] cluster site.

This sequence belongs to the complex I 23 kDa subunit family. As to quaternary structure, NDH is composed of at least 16 different subunits, 5 of which are encoded in the nucleus. The cofactor is [4Fe-4S] cluster.

The protein resides in the plastid. It localises to the chloroplast thylakoid membrane. It catalyses the reaction a plastoquinone + NADH + (n+1) H(+)(in) = a plastoquinol + NAD(+) + n H(+)(out). It carries out the reaction a plastoquinone + NADPH + (n+1) H(+)(in) = a plastoquinol + NADP(+) + n H(+)(out). NDH shuttles electrons from NAD(P)H:plastoquinone, via FMN and iron-sulfur (Fe-S) centers, to quinones in the photosynthetic chain and possibly in a chloroplast respiratory chain. The immediate electron acceptor for the enzyme in this species is believed to be plastoquinone. Couples the redox reaction to proton translocation, and thus conserves the redox energy in a proton gradient. The protein is NAD(P)H-quinone oxidoreductase subunit I, chloroplastic of Laphamia lindheimeri (Lindheimer's rockdaisy).